The primary structure comprises 290 residues: GTPase Era (290 aa).

The Era-type G domain occupies 2 to 169; sequence KSGFAAILGR…KNKIYENFSE (168 aa). Residues 10 to 17 form a G1 region; the sequence is GRPSTGKS. 10 to 17 is a binding site for GTP; the sequence is GRPSTGKS. The G2 stretch occupies residues 36–40; that stretch reads QTTRN. The G3 stretch occupies residues 57–60; it reads DTPG. Residues 57–61 and 119–122 each bind GTP; these read DTPGF and NKVD. The G4 stretch occupies residues 119–122; it reads NKVD. Residues 148-150 are G5; it reads ISA. Positions 200–276 constitute a KH type-2 domain; that stretch reads LKEELPYSLY…NLFLQVKLKK (77 aa).

It belongs to the TRAFAC class TrmE-Era-EngA-EngB-Septin-like GTPase superfamily. Era GTPase family. As to quaternary structure, monomer.

The protein resides in the cytoplasm. Its subcellular location is the cell inner membrane. Functionally, an essential GTPase that binds both GDP and GTP, with rapid nucleotide exchange. Plays a role in 16S rRNA processing and 30S ribosomal subunit biogenesis and possibly also in cell cycle regulation and energy metabolism. The protein is GTPase Era of Borreliella afzelii (strain PKo) (Borrelia afzelii).